Here is a 512-residue protein sequence, read N- to C-terminus: Maturase K (512 aa).

This sequence belongs to the intron maturase 2 family. MatK subfamily.

It localises to the plastid. The protein localises to the chloroplast. Its function is as follows. Usually encoded in the trnK tRNA gene intron. Probably assists in splicing its own and other chloroplast group II introns. The polypeptide is Maturase K (Amorphophallus paeoniifolius (Whitespot giant arum)).